Consider the following 981-residue polypeptide: Lateral signaling target protein 2 homolog (981 aa).

The tract at residues 308-462 (PLGSSSIEAP…LESSDDDTDE (155 aa)) is disordered. Composition is skewed to low complexity over residues 326–356 (TTSSSQNNNNSSNNNHSSSSTTTTTMGTTNT), 369–380 (NNHNSNSNSSTN), 390–404 (SPSMLSLSATSTPTA), and 412–433 (PSHSIDSTSSAATSSTNPPADW). Positions 434 to 462 (SDGDDEDEDDDDIEVDEEDLESSDDDTDE) are enriched in acidic residues. Phosphoserine occurs at positions 544 and 545. 2 disordered regions span residues 561–642 (EQMQ…SSLS) and 749–897 (DNVF…SPPA). A compositionally biased stretch (basic residues) spans 576–611 (HSHRHHQRHHHHHHHRHSHQHRQPHPHRTTRSGRKR). Low complexity predominate over residues 630–642 (LASGDTSAASSLS). A compositionally biased stretch (polar residues) spans 760–791 (ATGQRHSAGASMQRNNTIDLASQSGEGSPSGA). A Phosphoserine modification is found at Ser-805. Composition is skewed to low complexity over residues 811-866 (AASS…PVSA) and 883-896 (PSSATSTSATLSPP). The segment at 901–961 (DGKAPRCMAC…VCRDCYVREV (61 aa)) adopts an FYVE-type zinc-finger fold. Residues Cys-907, Cys-910, Cys-923, Cys-926, Cys-931, Cys-934, Cys-953, and Cys-956 each coordinate Zn(2+).

The protein belongs to the lst-2 family.

In terms of biological role, negative regulator of epidermal growth factor receptor (EGFR) signaling. This Drosophila erecta (Fruit fly) protein is Lateral signaling target protein 2 homolog.